The primary structure comprises 285 residues: V-set and transmembrane domain-containing protein 2B (285 aa).

The N-terminal stretch at 1 to 28 (MEQRNRLGALGYLLPLLLHSLLLFVADA) is a signal peptide. Residues 29-143 (TFTEVPKDVT…DDDTQEHKAQ (115 aa)) form the Ig-like V-type domain. Topologically, residues 29 to 263 (TFTEVPKDVT…HGSGTGPGYS (235 aa)) are extracellular. Cys-49 and Cys-127 are disulfide-bonded. A disordered region spans residues 160 to 225 (AEAVSHIQSS…AAAAAASATH (66 aa)). Composition is skewed to low complexity over residues 176–189 (ASSAVSSNNAGAAV) and 208–225 (PAGSGVPEAAAAAASATH). The chain crosses the membrane as a helical span at residues 264-284 (ADPLLSLLLLALHKFLHPLLG). Position 285 (His-285) is a topological domain, cytoplasmic.

The protein localises to the membrane. The protein is V-set and transmembrane domain-containing protein 2B (Vstm2b) of Mus musculus (Mouse).